Here is a 391-residue protein sequence, read N- to C-terminus: Terminal nucleotidyltransferase 5C (391 aa).

It belongs to the TENT family. Interacts with BCCIP and PABPC1; the interaction has no effect on TENT5C poly(A) polymerase function. Interacts with PLK4; this interaction leads to the TENT5C recruitment into the centrosome.

The protein localises to the nucleus. Its subcellular location is the cytoplasm. It is found in the cytoskeleton. It localises to the microtubule organizing center. The protein resides in the centrosome. The enzyme catalyses RNA(n) + ATP = RNA(n)-3'-adenine ribonucleotide + diphosphate. Functionally, catalyzes the transfer of one adenosine molecule from an ATP to an mRNA poly(A) tail bearing a 3'-OH terminal group and enhances mRNA stability and gene expression. Can also elongate RNA oligos ending with uridine molecule, provided that the sequence is adenosine-rich. Mainly targets mRNAs encoding endoplasmic reticulum-targeted protein. In Macaca fascicularis (Crab-eating macaque), this protein is Terminal nucleotidyltransferase 5C.